A 245-amino-acid chain; its full sequence is MRLSYFHSPDRVPAEGMADAAVAIDVLRATTTMAWALHNGAEAIQAFADLAQLDAAASAWPDDQSLRAGERGGQKLEGFDLGNSPLAVTPERIGGRRIFMSTTNGTRALDRVRSAPMLLTAALVNRSAVAQRLLQHRPEQIWMVGSGWEGAYSLEDSLAAGALADALLEGSGASLLDLAGNDETCAAHALWQQWKDQPEALLRLASHGQRLQRLGDHDADLACCATVDSLTVVPSQDEPGVLRLS.

This sequence belongs to the ComB family. Requires Mg(2+) as cofactor.

The catalysed reaction is (2R)-O-phospho-3-sulfolactate + H2O = (2R)-3-sulfolactate + phosphate. The polypeptide is Probable 2-phosphosulfolactate phosphatase (Synechococcus sp. (strain RCC307)).